Consider the following 321-residue polypeptide: Cytochrome c biogenesis protein CcsA (321 aa).

Helical transmembrane passes span 17–37 (IVSIVITIHLITLLVDEIVGL), 44–64 (GMISTFLCITGLLVTRWIYSG), 71–91 (LYESLIFLSWSFSIIHMIPYF), 98–118 (LSLVTAPSAIFTQGFATSGLL), 143–163 (MVLSYGALLCGSLLSVALLVI), 225–245 (VISLGFIFLTIGILSGAVWAN), 258–275 (ETWAFITWTIFAIYLHTR), and 286–306 (AIVASIGFIIIWICYFGVNLL).

The protein belongs to the CcmF/CycK/Ccl1/NrfE/CcsA family. As to quaternary structure, may interact with Ccs1.

It is found in the plastid. The protein localises to the chloroplast thylakoid membrane. Required during biogenesis of c-type cytochromes (cytochrome c6 and cytochrome f) at the step of heme attachment. This Buxus microphylla (Littleleaf boxwood) protein is Cytochrome c biogenesis protein CcsA.